A 106-amino-acid chain; its full sequence is MTKIIAVTACPSGVAHTYMAAEALESAAKAKGWEVKVETQGSIGLENELTAEDVASADMVILTKDIGIKFEERFAGKTIVRVNISDAVKRADAIMSKIEAHLAQTA.

Residues 1–103 form the PTS EIIB type-2 domain; the sequence is MTKIIAVTAC…IMSKIEAHLA (103 aa). Residue C10 is the Phosphocysteine intermediate of the active site. The residue at position 10 (C10) is a Phosphocysteine; by EIIA.

Its subcellular location is the cytoplasm. It catalyses the reaction D-fructose(out) + N(pros)-phospho-L-histidyl-[protein] = D-fructose 1-phosphate(in) + L-histidyl-[protein]. Functionally, the phosphoenolpyruvate-dependent sugar phosphotransferase system (sugar PTS), a major carbohydrate active transport system, catalyzes the phosphorylation of incoming sugar substrates concomitantly with their translocation across the cell membrane. The enzyme II FrwABC PTS system is involved in fructose transport. The polypeptide is PTS system fructose-like EIIB component 2 (frwB) (Escherichia coli O157:H7).